Here is a 325-residue protein sequence, read N- to C-terminus: Putative gluconeogenesis factor (325 aa).

Belongs to the gluconeogenesis factor family.

The protein resides in the cytoplasm. In terms of biological role, required for morphogenesis under gluconeogenic growth conditions. The sequence is that of Putative gluconeogenesis factor from Streptococcus pyogenes serotype M1.